Reading from the N-terminus, the 63-residue chain is Large ribosomal subunit protein uL29 (63 aa).

This sequence belongs to the universal ribosomal protein uL29 family.

This Shewanella frigidimarina (strain NCIMB 400) protein is Large ribosomal subunit protein uL29.